Reading from the N-terminus, the 310-residue chain is Homeobox protein knotted-1-like 2 (310 aa).

The interval 178-208 (SDDGAVSSDEELREDDDIAADDSQQRSNDRD) is disordered. The segment covering 185-197 (SDEELREDDDIAA) has biased composition (acidic residues). The region spanning 208–228 (DLKDQLLRKFGSHISSLKLEF) is the ELK domain. Residues 229-292 (SKKKKKGKLP…NQRKRHWKPS (64 aa)) constitute a DNA-binding region (homeobox; TALE-type).

Belongs to the TALE/KNOX homeobox family. In terms of assembly, may form heterodimeric complex with the TALE/BELL protein BEL1, BLH1 and BLH2. Interacts with OFP12 and OFP14. Interacts with BZIP30. In terms of tissue distribution, expressed predominantly in shoot apices of seedlings, in the receptacle and developing pistil of flowers and in axillary buds of inflorescence stems.

It is found in the nucleus. Functionally, may play a role in meristem function, and may be involved in maintaining cells in an undifferentiated, meristematic state. Probably binds to the DNA sequence 5'-TGAC-3'. The sequence is that of Homeobox protein knotted-1-like 2 (KNAT2) from Arabidopsis thaliana (Mouse-ear cress).